The following is a 267-amino-acid chain: Zerumbone synthase (267 aa).

9 to 33 (LVTGGASGIGESIARLFIEHGAKIC) contacts NAD(+). Position 142 (S142) interacts with substrate. Y155 serves as the catalytic Proton acceptor.

The protein belongs to the short-chain dehydrogenases/reductases (SDR) family. In terms of tissue distribution, expressed in leaves, stems and rhizomes.

The catalysed reaction is 10-hydroxy-alpha-humulene + NAD(+) = zerumbone + NADH + H(+). Functionally, catalyzes 8-hydroxy-alpha-humulene into zerumbone in presence of NAD. Also converts borneol to camphor in vitro. Zerumbone is a highly promising multi-anticancer agent. The polypeptide is Zerumbone synthase (ZSD1) (Zingiber zerumbet (Shampoo ginger)).